The sequence spans 858 residues: Alanine--tRNA ligase (858 aa).

Zn(2+)-binding residues include His-550, His-554, Cys-652, and His-656.

This sequence belongs to the class-II aminoacyl-tRNA synthetase family. Zn(2+) is required as a cofactor.

It localises to the cytoplasm. It catalyses the reaction tRNA(Ala) + L-alanine + ATP = L-alanyl-tRNA(Ala) + AMP + diphosphate. Functionally, catalyzes the attachment of alanine to tRNA(Ala) in a two-step reaction: alanine is first activated by ATP to form Ala-AMP and then transferred to the acceptor end of tRNA(Ala). Also edits incorrectly charged Ser-tRNA(Ala) and Gly-tRNA(Ala) via its editing domain. This is Alanine--tRNA ligase from Pseudothermotoga lettingae (strain ATCC BAA-301 / DSM 14385 / NBRC 107922 / TMO) (Thermotoga lettingae).